A 1121-amino-acid chain; its full sequence is Putative ATP-dependent RNA helicase ECM32 (1121 aa).

Positions 157–187 are disordered; the sequence is NSTRKPRKKGGRRVGRGKKGRKGAKIKKEKK. A compositionally biased stretch (basic residues) spans 160 to 184; that stretch reads RKPRKKGGRRVGRGKKGRKGAKIKK. Ser227 is modified (phosphoserine). The disordered stretch occupies residues 233–452; sequence AKVSKSETSR…NQEKNNGKTK (220 aa). Over residues 251–263 the composition is skewed to basic residues; it reads NKGKGNKANHKKN. Positions 278–287 are enriched in polar residues; sequence IRNNVRNSQP. Positions 307–316 are enriched in basic and acidic residues; sequence GKNESVDKHQ. Over residues 323–336 the composition is skewed to low complexity; it reads LNGNGSGSTNTTGL. A compositionally biased stretch (basic and acidic residues) spans 342 to 363; sequence DHAGQKTKGNDKTGNKNPREAK. The segment covering 376–413 has biased composition (polar residues); it reads KSNNQPNKGTSRWTIGSDTESSREPSISPNENTTSITK. Ser392 bears the Phosphoserine mark. Residues 426 to 452 are compositionally biased toward basic and acidic residues; it reads LNEKSKTTTMPKKLETKNQEKNNGKTK. Position 465 is a phosphothreonine (Thr465). 670–677 contributes to the ATP binding site; it reads GPPGTGKT.

This sequence belongs to the DNA2/NAM7 helicase family. In terms of assembly, interacts with the peptidyl release factors SUP35 and weakly with SUP45.

It localises to the cytoplasm. The catalysed reaction is ATP + H2O = ADP + phosphate + H(+). In terms of biological role, probable RNA helicase, which may be involved in modulation of the translation termination process. Probably unwinds double-stranded RNA. In vitro, unwinds covalently closed, circular DNA in the presence of a DNA topoisomerase TOP1 and replication factor-A protein RFA1. This is Putative ATP-dependent RNA helicase ECM32 (ECM32) from Saccharomyces cerevisiae (strain ATCC 204508 / S288c) (Baker's yeast).